The following is a 168-amino-acid chain: Peptide methionine sulfoxide reductase 2 (168 aa).

The MsrB domain occupies 40–168 (DVKWNDALTP…NSASLNLKKD (129 aa)). Positions 79, 82, 128, and 131 each coordinate Zn(2+). An intrachain disulfide couples cysteine 97 to cysteine 157. Cysteine 157 (nucleophile) is an active-site residue.

The protein belongs to the MsrB Met sulfoxide reductase family. The cofactor is Zn(2+).

The enzyme catalyses L-methionyl-[protein] + [thioredoxin]-disulfide + H2O = L-methionyl-(R)-S-oxide-[protein] + [thioredoxin]-dithiol. In terms of biological role, methionine-R-sulfoxide reductase which catalyzes the reduction of methionine sulfoxide (MetSO) to methionine in proteins. Plays a protective role against oxidative stress by restoring activity to proteins that have been inactivated by methionine oxidation. Protects iron-sulfur clusters from oxidative inactivation along with MXR1. Involved in the regulation of lifespan. The protein is Peptide methionine sulfoxide reductase 2 (MXR2) of Saccharomyces cerevisiae (strain ATCC 204508 / S288c) (Baker's yeast).